The following is a 132-amino-acid chain: Small ribosomal subunit protein uS8 (132 aa).

This sequence belongs to the universal ribosomal protein uS8 family. As to quaternary structure, part of the 30S ribosomal subunit. Contacts proteins S5 and S12.

Functionally, one of the primary rRNA binding proteins, it binds directly to 16S rRNA central domain where it helps coordinate assembly of the platform of the 30S subunit. The polypeptide is Small ribosomal subunit protein uS8 (Latilactobacillus sakei subsp. sakei (strain 23K) (Lactobacillus sakei subsp. sakei)).